The chain runs to 124 residues: Small ribosomal subunit protein eS8 (124 aa).

Positions 1-22 are enriched in basic residues; it reads MQYQGRSKRSKTGARLRPRSKK. 2 disordered regions span residues 1-40 and 102-124; these read MQYQGRSKRSKTGARLRPRSKKSKSELGREPTETTVGEPR and AGTARVTSRPGQDGQVNATRVDE. A compositionally biased stretch (basic and acidic residues) spans 23–32; it reads SKSELGREPT. Over residues 106–124 the composition is skewed to polar residues; that stretch reads RVTSRPGQDGQVNATRVDE.

The protein belongs to the eukaryotic ribosomal protein eS8 family. As to quaternary structure, part of the 30S ribosomal subunit.

This is Small ribosomal subunit protein eS8 from Halobacterium salinarum (strain ATCC 29341 / DSM 671 / R1).